We begin with the raw amino-acid sequence, 196 residues long: Pyridoxal 5'-phosphate synthase subunit PdxT (196 aa).

Residue 47-49 (GES) coordinates L-glutamine. Residue Cys-79 is the Nucleophile of the active site. L-glutamine is bound by residues Arg-106 and 134–135 (IR). Catalysis depends on charge relay system residues His-170 and Glu-172.

It belongs to the glutaminase PdxT/SNO family. In terms of assembly, in the presence of PdxS, forms a dodecamer of heterodimers. Only shows activity in the heterodimer.

It carries out the reaction aldehydo-D-ribose 5-phosphate + D-glyceraldehyde 3-phosphate + L-glutamine = pyridoxal 5'-phosphate + L-glutamate + phosphate + 3 H2O + H(+). The enzyme catalyses L-glutamine + H2O = L-glutamate + NH4(+). Its pathway is cofactor biosynthesis; pyridoxal 5'-phosphate biosynthesis. Its function is as follows. Catalyzes the hydrolysis of glutamine to glutamate and ammonia as part of the biosynthesis of pyridoxal 5'-phosphate. The resulting ammonia molecule is channeled to the active site of PdxS. The sequence is that of Pyridoxal 5'-phosphate synthase subunit PdxT from Bacillus cereus (strain Q1).